The chain runs to 192 residues: Peptidyl-tRNA hydrolase (192 aa).

Tyr-17 serves as a coordination point for tRNA. His-22 functions as the Proton acceptor in the catalytic mechanism. TRNA contacts are provided by Phe-68, Asn-70, and Asn-116.

The protein belongs to the PTH family. In terms of assembly, monomer.

Its subcellular location is the cytoplasm. The catalysed reaction is an N-acyl-L-alpha-aminoacyl-tRNA + H2O = an N-acyl-L-amino acid + a tRNA + H(+). Its function is as follows. Hydrolyzes ribosome-free peptidyl-tRNAs (with 1 or more amino acids incorporated), which drop off the ribosome during protein synthesis, or as a result of ribosome stalling. In terms of biological role, catalyzes the release of premature peptidyl moieties from peptidyl-tRNA molecules trapped in stalled 50S ribosomal subunits, and thus maintains levels of free tRNAs and 50S ribosomes. The polypeptide is Peptidyl-tRNA hydrolase (Xylella fastidiosa (strain Temecula1 / ATCC 700964)).